The chain runs to 600 residues: Aspartate--tRNA(Asp/Asn) ligase (600 aa).

Residue Glu-174 coordinates L-aspartate. Residues 198-201 form an aspartate region; it reads QLFK. Arg-220 is an L-aspartate binding site. ATP contacts are provided by residues 220–222 and Gln-229; that span reads RDE. His-457 contacts L-aspartate. Residue Glu-491 coordinates ATP. Arg-498 contributes to the L-aspartate binding site. Residue 543 to 546 participates in ATP binding; that stretch reads GLDR.

The protein belongs to the class-II aminoacyl-tRNA synthetase family. Type 1 subfamily. As to quaternary structure, homodimer.

It localises to the cytoplasm. It carries out the reaction tRNA(Asx) + L-aspartate + ATP = L-aspartyl-tRNA(Asx) + AMP + diphosphate. Aspartyl-tRNA synthetase with relaxed tRNA specificity since it is able to aspartylate not only its cognate tRNA(Asp) but also tRNA(Asn). Reaction proceeds in two steps: L-aspartate is first activated by ATP to form Asp-AMP and then transferred to the acceptor end of tRNA(Asp/Asn). The chain is Aspartate--tRNA(Asp/Asn) ligase from Burkholderia cenocepacia (strain ATCC BAA-245 / DSM 16553 / LMG 16656 / NCTC 13227 / J2315 / CF5610) (Burkholderia cepacia (strain J2315)).